The primary structure comprises 243 residues: R-spondin-2 (243 aa).

Residues 1-21 form the signal peptide; that stretch reads MQFQLFSFVLIILNCVDYSHC. 11 disulfide bridges follow: Cys40/Cys46, Cys43/Cys52, Cys55/Cys74, Cys78/Cys93, Cys96/Cys104, Cys101/Cys110, Cys113/Cys124, Cys128/Cys141, Cys145/Cys187, Cys156/Cys163, and Cys196/Cys203. The stretch at 90–134 is one FU repeat; sequence MNRCSRCRIENCDSCFSRDFCIKCKSGFYSHKGQCFEECPEGFAP. The region spanning 144–204 is the TSP type-1 domain; the sequence is GCEVGPWSEW…RCKMAMRHCP (61 aa). N-linked (GlcNAc...) asparagine glycosylation occurs at Asn160. Residues 202 to 243 form a disordered region; the sequence is HCPGGTRTTKKKDKKNKKKKKKLLERAQEQHSVVLATDRSSQ. The span at 209-224 shows a compositional bias: basic residues; the sequence is TTKKKDKKNKKKKKKL.

Belongs to the R-spondin family. In terms of assembly, binds heparin.

Its subcellular location is the secreted. In terms of biological role, activator of the canonical Wnt signaling pathway by acting as a ligand for lgr4-6 receptors. Upon binding to lgr4-6 (lgr4, lgr5 or lgr6), lgr4-6 associate with phosphorylated lrp6 and frizzled receptors that are activated by extracellular Wnt receptors, triggering the canonical Wnt signaling pathway to increase expression of target genes. Acts both in the canonical. Wnt/beta-catenin-dependent pathway and in non-canonical Wnt signaling pathway. Activates neural markers and promotes muscle formation. Overexpression blocks activin, nodal and BMP4 signaling, suggesting that it may negatively regulate the TGF-beta pathway. During embryonic development, plays a crucial role in limb specification, amplifying the Wnt signaling pathway independently of LGR4-6 receptors, possibly by acting as a direct antagonistic ligand to RNF43 and ZNRF3, hence governing the number of limbs an embryo should form. In Xenopus tropicalis (Western clawed frog), this protein is R-spondin-2 (rspo2).